A 136-amino-acid polypeptide reads, in one-letter code: TBK1 inhibitor DP96R (136 aa).

A disordered region spans residues 66–86 (NNALEKPAGANNIPEKSAGRM).

The protein belongs to the asfivirus DP96R family.

Inhibits cGAS-STING-mediated type I IFN expression and NF-kB activation by inhibiting TBK1 and IKBKB/IKKB. Inhibits host TBK1 phosphorylation. In Ornithodoros (relapsing fever ticks), this protein is TBK1 inhibitor DP96R.